A 208-amino-acid chain; its full sequence is Imidazoleglycerol-phosphate dehydratase (208 aa).

It belongs to the imidazoleglycerol-phosphate dehydratase family.

Its subcellular location is the cytoplasm. It catalyses the reaction D-erythro-1-(imidazol-4-yl)glycerol 3-phosphate = 3-(imidazol-4-yl)-2-oxopropyl phosphate + H2O. The protein operates within amino-acid biosynthesis; L-histidine biosynthesis; L-histidine from 5-phospho-alpha-D-ribose 1-diphosphate: step 6/9. The protein is Imidazoleglycerol-phosphate dehydratase of Pseudarthrobacter chlorophenolicus (strain ATCC 700700 / DSM 12829 / CIP 107037 / JCM 12360 / KCTC 9906 / NCIMB 13794 / A6) (Arthrobacter chlorophenolicus).